The sequence spans 1010 residues: Contactin-1 (1010 aa).

The N-terminal stretch at Met-1–Asp-19 is a signal peptide. 6 Ig-like C2-type domains span residues Pro-33–Ser-123, Pro-132–Phe-215, Pro-232–Tyr-317, Pro-322–Lys-398, Pro-404–Glu-491, and Thr-496–Arg-592. 2 disulfide bridges follow: Cys-57–Cys-106 and Cys-150–Cys-203. 2 N-linked (GlcNAc...) asparagine glycosylation sites follow: Asn-200 and Asn-249. A disulfide bond links Cys-254 and Cys-301. Residue Asn-329 is glycosylated (N-linked (GlcNAc...) asparagine). Intrachain disulfides connect Cys-343-Cys-382 and Cys-427-Cys-475. N-linked (GlcNAc...) asparagine glycosylation is found at Asn-448, Asn-464, Asn-485, and Asn-512. Residues Cys-517 and Cys-574 are joined by a disulfide bond. Asn-582 carries N-linked (GlcNAc...) asparagine glycosylation. Fibronectin type-III domains follow at residues Pro-597 to Ala-695, Ala-700 to Asp-797, Val-802 to Ser-897, and Arg-899 to Val-990. A compositionally biased stretch (polar residues) spans Gly-679–Arg-689. A disordered region spans residues Gly-679–Gly-708. N-linked (GlcNAc...) asparagine glycosylation is present at Asn-924. Residue Ser-984 is the site of GPI-anchor amidated serine attachment. The propeptide at Gly-985–Phe-1010 is removed in mature form.

Belongs to the immunoglobulin superfamily. Contactin family. As to quaternary structure, interacts with TNR.

The protein localises to the cell membrane. In terms of biological role, mediates cell surface interactions during nervous system development. Interaction with TNR enhances the neurite outgrowth. The protein is Contactin-1 (CNTN1) of Gallus gallus (Chicken).